The chain runs to 188 residues: PRA1 family protein 3 (188 aa).

M1 carries the N-acetylmethionine modification. Residues 1–35 (MEVQVAPLRSWEDFFPGSDRFGRPDFKDISKWNNR) are Cytoplasmic-facing. Transmembrane regions (helical) follow at residues 36-56 (VVNNLLYYQTNYLMVAAAVVA) and 57-77 (IVGFLSPLNMLIGGTVVILVF). At 78-93 (LGFVWVSHNKDILRRM) the chain is on the cytoplasmic side. 2 helical membrane-spanning segments follow: residues 94-114 (KKQYPTTFVIVIMLSSYFLIS) and 115-135 (YLGDVMVFMFGITLPLLLMFI). Residues 136 to 188 (HASLRLRNIKNKLENKKEEIGLKKTPMGIILDALEQQEDNINKLASYIPKVKE) are Cytoplasmic-facing. Residues 136-188 (HASLRLRNIKNKLENKKEEIGLKKTPMGIILDALEQQEDNINKLASYIPKVKE) form a targeting to endoplasmic reticulum membrane region.

It belongs to the PRA1 family. In terms of assembly, binds to prenylated RAB and Ras superfamily members.

Its subcellular location is the endoplasmic reticulum membrane. The protein localises to the cell membrane. It localises to the cytoplasm. The protein resides in the cytoskeleton. Its function is as follows. Regulates intracellular concentrations of taurine and glutamate. Negatively modulates SLC1A1/EAAC1 glutamate transport activity by decreasing its affinity for glutamate in a PKC activity-dependent manner. May be involved in membrane traffic. The chain is PRA1 family protein 3 (ARL6IP5) from Gallus gallus (Chicken).